The sequence spans 113 residues: Nucleoid-associated protein sync_0026 (113 aa).

Belongs to the YbaB/EbfC family. As to quaternary structure, homodimer.

It is found in the cytoplasm. The protein resides in the nucleoid. Functionally, binds to DNA and alters its conformation. May be involved in regulation of gene expression, nucleoid organization and DNA protection. The chain is Nucleoid-associated protein sync_0026 from Synechococcus sp. (strain CC9311).